The following is a 493-amino-acid chain: Anthranilate synthase component 1 (493 aa).

Residues S48 and 273–275 contribute to the L-tryptophan site; that span reads PYM. 308–309 provides a ligand contact to chorismate; sequence GT. A Mg(2+)-binding site is contributed by E335. Chorismate-binding positions include Y423, R443, 457 to 459, and G459; that span reads GGG. Residue E472 coordinates Mg(2+).

This sequence belongs to the anthranilate synthase component I family. Heterotetramer consisting of two non-identical subunits: a beta subunit (TrpG) and a large alpha subunit (TrpE). It depends on Mg(2+) as a cofactor.

The enzyme catalyses chorismate + L-glutamine = anthranilate + pyruvate + L-glutamate + H(+). It participates in amino-acid biosynthesis; L-tryptophan biosynthesis; L-tryptophan from chorismate: step 1/5. Its activity is regulated as follows. Feedback inhibited by tryptophan. Part of a heterotetrameric complex that catalyzes the two-step biosynthesis of anthranilate, an intermediate in the biosynthesis of L-tryptophan. In the first step, the glutamine-binding beta subunit (TrpG) of anthranilate synthase (AS) provides the glutamine amidotransferase activity which generates ammonia as a substrate that, along with chorismate, is used in the second step, catalyzed by the large alpha subunit of AS (TrpE) to produce anthranilate. In the absence of TrpG, TrpE can synthesize anthranilate directly from chorismate and high concentrations of ammonia. The polypeptide is Anthranilate synthase component 1 (trpE) (Pseudomonas putida (Arthrobacter siderocapsulatus)).